Here is a 372-residue protein sequence, read N- to C-terminus: Mitogen-activated protein kinase spk1 (372 aa).

Residues 1–25 (MASATSTPTIADGNSNKESVATSRS) show a composition bias toward polar residues. The disordered stretch occupies residues 1–29 (MASATSTPTIADGNSNKESVATSRSPHTH). The region spanning 39–327 (YEMINLIGQG…AEEALKHPYV (289 aa)) is the Protein kinase domain. ATP is bound by residues 45–53 (IGQGAYGVV) and lysine 68. Aspartate 163 (proton acceptor) is an active-site residue. Residue threonine 199 is modified to Phosphothreonine. The TXY motif lies at 199-201 (TEY). Tyrosine 201 carries the post-translational modification Phosphotyrosine.

Belongs to the protein kinase superfamily. CMGC Ser/Thr protein kinase family. MAP kinase subfamily. Mg(2+) is required as a cofactor. Post-translationally, dually phosphorylated on Thr-199 and Tyr-201, which activates the enzyme.

Its subcellular location is the nucleus. The enzyme catalyses L-seryl-[protein] + ATP = O-phospho-L-seryl-[protein] + ADP + H(+). It catalyses the reaction L-threonyl-[protein] + ATP = O-phospho-L-threonyl-[protein] + ADP + H(+). Activated by tyrosine and threonine phosphorylation. Its function is as follows. Involved in mating signal transduction pathway. This is Mitogen-activated protein kinase spk1 (spk1) from Schizosaccharomyces pombe (strain 972 / ATCC 24843) (Fission yeast).